We begin with the raw amino-acid sequence, 228 residues long: Ankyrin repeat domain-containing protein 46 (228 aa).

ANK repeat units follow at residues 11–40 (QTSV…DPNI), 44–73 (RGRT…DLLA), 77–103 (QGNT…KIDI), and 107–138 (NGST…EVKG). The helical transmembrane segment at 195 to 215 (VLLLLVVIALLSLGIAYYVSG) threads the bilayer.

Its subcellular location is the membrane. This Danio rerio (Zebrafish) protein is Ankyrin repeat domain-containing protein 46 (ankrd46).